The following is a 322-amino-acid chain: uncharacterized protein (322 aa).

The next 8 helical transmembrane spans lie at 7 to 27 (IQKI…IGAI), 54 to 74 (AFAL…LAMF), 87 to 107 (FVGF…LSGS), 128 to 148 (IAFC…ITFV), 162 to 182 (FLSV…YLLI), 209 to 229 (IGLT…LLPG), 249 to 269 (GIIS…LFLL), and 287 to 307 (VIYY…FELL).

To E.coli YbhN.

It is found in the cell membrane. This is an uncharacterized protein from Synechocystis sp. (strain ATCC 27184 / PCC 6803 / Kazusa).